The following is a 93-amino-acid chain: Molybdopterin synthase sulfur carrier subunit (93 aa).

Gly-93 bears the 1-thioglycine; alternate mark. Gly-93 carries the glycyl adenylate; alternate modification.

The protein belongs to the MoaD family. MOCS2A subfamily. In terms of assembly, heterotetramer; composed of 2 small (MOCS2A) and 2 large (MOCS2B) subunits. Post-translationally, C-terminal thiocarboxylation occurs in 2 steps, it is first acyl-adenylated (-COAMP) via the hesA/moeB/thiF part of UBA4, then thiocarboxylated (-COSH) via the rhodanese domain of UBA4.

It localises to the cytoplasm. Its pathway is cofactor biosynthesis; molybdopterin biosynthesis. In terms of biological role, acts as a sulfur carrier required for molybdopterin biosynthesis. Component of the molybdopterin synthase complex that catalyzes the conversion of precursor Z into molybdopterin by mediating the incorporation of 2 sulfur atoms into precursor Z to generate a dithiolene group. In the complex, serves as sulfur donor by being thiocarboxylated (-COSH) at its C-terminus by UBA4. After interaction with MOCS2B, the sulfur is then transferred to precursor Z to form molybdopterin. The sequence is that of Molybdopterin synthase sulfur carrier subunit from Mycosarcoma maydis (Corn smut fungus).